A 600-amino-acid polypeptide reads, in one-letter code: Proton channel OTOP1 (600 aa).

Residues 1–50 (MPGDRGALSSPAASSGSPSAAPSGIAACPPPPSPLARASPQASGPRRGAS) form a disordered region. The Cytoplasmic segment spans residues 1–56 (MPGDRGALSSPAASSGSPSAAPSGIAACPPPPSPLARASPQASGPRRGASVPQKLA). Positions 7–27 (ALSSPAASSGSPSAAPSGIAA) are enriched in low complexity. The helical transmembrane segment at 57 to 78 (ETLSSQYGLNVFVAGLLFLLAW) threads the bilayer. Residues 79-86 (AVHATGVG) are Extracellular-facing. The chain crosses the membrane as a helical span at residues 87-110 (KSDLLCVLTALMLLQLLWMLWYVG). Topologically, residues 111 to 128 (RSYMQRRLIRPKDTHAGA) are cytoplasmic. The chain crosses the membrane as a helical span at residues 129–151 (RWLRGSITLFAFITIVLGCLKVA). Over 152-161 (YFIGFSECLS) the chain is Extracellular. Residues 162 to 186 (ATEGVFPVTHAVHTLLQVYFLWGHA) form a helical membrane-spanning segment. At 187–194 (KDIIMSFK) the chain is on the cytoplasmic side. The helical transmembrane segment at 195 to 221 (TLERFGVIHSVFTNLLLWANSVLNESK) threads the bilayer. Residues 222–262 (HQLNEHKERLITLGFGNITIVLDDHTPQCNCTPPALCSALS) are Extracellular-facing. Residues 263–288 (HGIYYLYPFNIEYQILASTMLYVLWK) traverse the membrane as a helical segment. Residues 289–309 (NIGRRVDSSRHQKMQCRFDGV) are Cytoplasmic-facing. The helical transmembrane segment at 310–332 (LVGSVLGLTVLAATIAVVVVYMI) threads the bilayer. At 333–342 (HIGRSKSKSE) the chain is on the extracellular side. Residues 343 to 368 (SALIMFYLYAITVLLLMGAAGLVGSW) traverse the membrane as a helical segment. Topologically, residues 369–386 (IYRVDEKSLDESKNPARK) are cytoplasmic. The chain crosses the membrane as a helical span at residues 387-411 (LDADLLVATASGSWLLSWGSILAIA). Over 412 to 421 (CAETRPPYTW) the chain is Extracellular. A helical transmembrane segment spans residues 422-442 (YNLPYSVLVIVEKYVQNIFII). Residues 443–532 (ESVHLEPEGV…QGGMKRRLLR (90 aa)) lie on the Cytoplasmic side of the membrane. Residues 533 to 551 (NITAFLFLCNISLWIPPAF) form a helical membrane-spanning segment. Over 552–569 (GCRPEYDNGLEEIVFGFE) the chain is Extracellular. The chain crosses the membrane as a helical span at residues 570–593 (PWIIVVNLAMPFSIFYRMHAAAAL). The Cytoplasmic portion of the chain corresponds to 594–600 (FEVYCKI).

The protein belongs to the otopetrin family. In terms of assembly, homodimer. Interacts with STAT1, independently of STAT1 phosphorylation status.

The protein resides in the cell membrane. It localises to the cell projection. Its subcellular location is the microvillus. It catalyses the reaction H(+)(in) = H(+)(out). Activated by both acid and alkali, with proton influx in response to extracellular acid and proton efflux during alkali stimulation. Inhibited by Zn(2+); this inhibition is thought to be pH-sensitive. Currents evoked in response to mild acid (pH 6.0) stimulus may also be mildly potentiated by exposure to Zn(2+). Activated by NH(4)Cl. In terms of biological role, proton-selective ion channel. Biphasically modulated by acid and alkali, mediating proton influx and efflux in response to extracellular acid and base stimulation, respectively. Sour taste receptor, which carries inward currents in response to extracellular acidification. Sensor for ammonium chloride (NH(4)Cl) in taste receptor cells. NH(4)Cl acts by increasing the intracellular pH, thereby generating a driving force for proton entry through OTOP1 channel. Might also participate in alkaline sensation. Plays a role in the regulation of Ca(2+) flux in response to purigenic (ATP, ADP and UDP) stimuli, leading to increase in cytosolic Ca(2+) due to influx of extracellular calcium. May play this role by inhibiting P2Y purinoceptor-mediated Ca(2+) release in a Ca(2+)-dependent manner and promote an influx of Ca(2+) in response to ATP. Through this mechanism and possibly others, plays a role in the formation and function of calcium carbonate-based structures in the vestibular system of the inner ear, called otoconia, that sense gravity and linear acceleration. In obesity, may attenuate adipose tissue inflammation, through the negative regulation of IFNG signaling, hence may play an adaptive role in the maintainance of metabolic homeostasis. Following alkali activation, may also be permeable Na(+), K(+), Cs(+) and Li(+). The protein is Proton channel OTOP1 of Rattus norvegicus (Rat).